An 81-amino-acid chain; its full sequence is Probable antitoxin MazE2 (81 aa).

In terms of assembly, forms a complex with cognate toxin MazF2.

Antitoxin component of a type II toxin-antitoxin (TA) system. The polypeptide is Probable antitoxin MazE2 (mazE2) (Mycobacterium tuberculosis (strain ATCC 25618 / H37Rv)).